A 551-amino-acid chain; its full sequence is Colicin-E6 (551 aa).

Disordered regions lie at residues 1–74, 244–269, 293–317, 406–501, and 517–551; these read MSGG…SGGG, LSPG…NTRD, PDQV…HPVE, NKQA…WYGD, and EGYR…KKYL. The span at 20–35 shows a compositional bias: gly residues; it reads INGGPTGLGVGGGASD. The segment covering 36-45 has biased composition (low complexity); sequence GSGWSSENNP. The segment covering 46-74 has biased composition (gly residues); that stretch reads WGGGSGSGIHWGGGSGHGNGGGNGNSGGG. Basic and acidic residues-rich tracts occupy residues 296 to 317 and 430 to 484; these read VKQR…HPVE and ESRK…EGKP. The tract at residues 455–551 is ribosome inactivating activity; that stretch reads KGVKDYGHDY…DPKRNIKKYL (97 aa). Positions 530 to 551 are binding of immunity protein; that stretch reads FEPKTGNQLKGPDPKRNIKKYL.

The protein belongs to the cloacin colicin family.

In terms of biological role, inactivates ribosomes by hydrolyzing 16S RNA in 30S ribosomes at a specific site. Its function is as follows. Colicins are polypeptide toxins produced by and active against E.coli and closely related bacteria. The chain is Colicin-E6 from Escherichia coli.